The sequence spans 1058 residues: Isoleucine--tRNA ligase (1058 aa).

Residues 48-58 carry the 'HIGH' region motif; the sequence is PYTTGHIHLGT. The short motif at 596-600 is the 'KMSKS' region element; it reads KMSKS. Residue Lys599 coordinates ATP.

Belongs to the class-I aminoacyl-tRNA synthetase family. IleS type 2 subfamily. Monomer. Zn(2+) is required as a cofactor.

It localises to the cytoplasm. It catalyses the reaction tRNA(Ile) + L-isoleucine + ATP = L-isoleucyl-tRNA(Ile) + AMP + diphosphate. Its function is as follows. Catalyzes the attachment of isoleucine to tRNA(Ile). As IleRS can inadvertently accommodate and process structurally similar amino acids such as valine, to avoid such errors it has two additional distinct tRNA(Ile)-dependent editing activities. One activity is designated as 'pretransfer' editing and involves the hydrolysis of activated Val-AMP. The other activity is designated 'posttransfer' editing and involves deacylation of mischarged Val-tRNA(Ile). The sequence is that of Isoleucine--tRNA ligase from Methanosarcina acetivorans (strain ATCC 35395 / DSM 2834 / JCM 12185 / C2A).